Consider the following 100-residue polypeptide: Aspartyl/glutamyl-tRNA(Asn/Gln) amidotransferase subunit C (100 aa).

The protein belongs to the GatC family. Heterotrimer of A, B and C subunits.

It catalyses the reaction L-glutamyl-tRNA(Gln) + L-glutamine + ATP + H2O = L-glutaminyl-tRNA(Gln) + L-glutamate + ADP + phosphate + H(+). It carries out the reaction L-aspartyl-tRNA(Asn) + L-glutamine + ATP + H2O = L-asparaginyl-tRNA(Asn) + L-glutamate + ADP + phosphate + 2 H(+). Functionally, allows the formation of correctly charged Asn-tRNA(Asn) or Gln-tRNA(Gln) through the transamidation of misacylated Asp-tRNA(Asn) or Glu-tRNA(Gln) in organisms which lack either or both of asparaginyl-tRNA or glutaminyl-tRNA synthetases. The reaction takes place in the presence of glutamine and ATP through an activated phospho-Asp-tRNA(Asn) or phospho-Glu-tRNA(Gln). This Staphylococcus haemolyticus (strain JCSC1435) protein is Aspartyl/glutamyl-tRNA(Asn/Gln) amidotransferase subunit C.